We begin with the raw amino-acid sequence, 354 residues long: DNA-binding protein EMBP-1 (354 aa).

Disordered regions lie at residues 1 to 24 (MASS…TPAQ), 106 to 193 (SAAG…RSAS), and 230 to 273 (EVNA…RKQQ). 2 stretches are compositionally biased toward low complexity: residues 127 to 140 (SSSG…QGSS) and 232 to 245 (NAAA…SLSQ). Residues 246–265 (MDERELKRERRKQSNRESAR) show a composition bias toward basic and acidic residues. The bZIP domain maps to 250–313 (ELKRERRKQS…KTMETENKKL (64 aa)). The segment at 252-271 (KRERRKQSNRESARRSRLRK) is basic motif. Residues 278–299 (LAQKVSELTAANGTLRSELDQL) form a leucine-zipper region.

It belongs to the bZIP family. As to quaternary structure, heterodimer.

It localises to the nucleus. Interacts specifically with the 8-bp sequence 5'-CACGTGGC-3'in the abscisic acid response element (ABARE). Also binds to the hexamer motif 5'-ACGTCA-3' of histone gene promoters. The chain is DNA-binding protein EMBP-1 from Triticum aestivum (Wheat).